Here is a 272-residue protein sequence, read N- to C-terminus: Interleukin-2 receptor subunit alpha (272 aa).

The first 21 residues, 1–21 (MDPYLLMWGLLTFITVPGCQA), serve as a signal peptide directing secretion. A Sushi 1 domain is found at 22–84 (ELCDDDPPKI…SWDNQCQCTS (63 aa)). Residues 22 to 240 (ELCDDDPPKI…ETFIFTTEYQ (219 aa)) are Extracellular-facing. 3 cysteine pairs are disulfide-bonded: Cys24–Cys67, Cys49–Cys80, and Cys51–Cys82. 2 N-linked (GlcNAc...) asparagine glycosylation sites follow: Asn70 and Asn89. A compositionally biased stretch (polar residues) spans 87 to 98 (ARNTTKQVTPQP). A disordered region spans residues 87-109 (ARNTTKQVTPQPEEQKERKTTEM). The Sushi 2 domain maps to 123-186 (GHCREPPPWE…WTQPQLICTG (64 aa)). 2 cysteine pairs are disulfide-bonded: Cys125–Cys168 and Cys152–Cys184. The disordered stretch occupies residues 186–213 (GETEPSQFPGEEEPQASPDGLPESETSR). A helical transmembrane segment spans residues 241–259 (VAVAGCVFLLISVLLLSGL). At 260 to 272 (TWQRRQRKNRRTI) the chain is on the cytoplasmic side.

In terms of assembly, non-covalent dimer of an alpha and a beta subunit. IL2R exists in 3 different forms: a high affinity dimer, an intermediate affinity monomer (beta subunit), and a low affinity monomer (alpha subunit). The high and intermediate affinity forms also associate with a gamma subunit.

It localises to the membrane. Functionally, receptor for interleukin-2. The receptor is involved in the regulation of immune tolerance by controlling regulatory T cells (TREGs) activity. TREGs suppress the activation and expansion of autoreactive T-cells. The protein is Interleukin-2 receptor subunit alpha (IL2RA) of Macaca mulatta (Rhesus macaque).